Consider the following 156-residue polypeptide: ATP synthase subunit b (156 aa).

A helical transmembrane segment spans residues 7–27 (LFAQMVVFLILAWFTMKFVWP).

Belongs to the ATPase B chain family. F-type ATPases have 2 components, F(1) - the catalytic core - and F(0) - the membrane proton channel. F(1) has five subunits: alpha(3), beta(3), gamma(1), delta(1), epsilon(1). F(0) has three main subunits: a(1), b(2) and c(10-14). The alpha and beta chains form an alternating ring which encloses part of the gamma chain. F(1) is attached to F(0) by a central stalk formed by the gamma and epsilon chains, while a peripheral stalk is formed by the delta and b chains.

The protein resides in the cell inner membrane. Its function is as follows. F(1)F(0) ATP synthase produces ATP from ADP in the presence of a proton or sodium gradient. F-type ATPases consist of two structural domains, F(1) containing the extramembraneous catalytic core and F(0) containing the membrane proton channel, linked together by a central stalk and a peripheral stalk. During catalysis, ATP synthesis in the catalytic domain of F(1) is coupled via a rotary mechanism of the central stalk subunits to proton translocation. Component of the F(0) channel, it forms part of the peripheral stalk, linking F(1) to F(0). This chain is ATP synthase subunit b, found in Paraburkholderia phymatum (strain DSM 17167 / CIP 108236 / LMG 21445 / STM815) (Burkholderia phymatum).